A 213-amino-acid polypeptide reads, in one-letter code: MSADIRFDSLKTIVPAVSRETADRLIAFEDLFRKWSKAINLASPSTLADLWNRHILDSVQLFPLAKEATRWLDIGSGGGFPGIVTACFLAERSGGCIDLVESAGKKAAFLRTAAGHLHVPARVHSARIESMWEKIETPQVVTARALASLGDLFTLAEPWLSDGAKALFQKGRDYQREIDESRVGWSFDLVKHPSAIDQASVILEISNLRRKTD.

Residues Gly75, Phe80, 128 to 129 (IE), and Arg144 each bind S-adenosyl-L-methionine.

This sequence belongs to the methyltransferase superfamily. RNA methyltransferase RsmG family.

It is found in the cytoplasm. The enzyme catalyses guanosine(527) in 16S rRNA + S-adenosyl-L-methionine = N(7)-methylguanosine(527) in 16S rRNA + S-adenosyl-L-homocysteine. Specifically methylates the N7 position of guanine in position 527 of 16S rRNA. The sequence is that of Ribosomal RNA small subunit methyltransferase G from Brucella ovis (strain ATCC 25840 / 63/290 / NCTC 10512).